Reading from the N-terminus, the 100-residue chain is uncharacterized protein (100 aa).

A helical transmembrane segment spans residues 28–45; that stretch reads VFLVFYIITMVKIYIFLI.

The protein localises to the membrane. This is an uncharacterized protein from Saccharomyces cerevisiae (strain ATCC 204508 / S288c) (Baker's yeast).